Here is a 318-residue protein sequence, read N- to C-terminus: Thymidylate synthase (318 aa).

DUMP is bound by residues Arg25 and 180–181 (RR). The active-site Nucleophile is Cys200. DUMP is bound by residues 220–223 (RSGD), Asn231, and 261–263 (HIY). Asp223 is a binding site for (6R)-5,10-methylene-5,6,7,8-tetrahydrofolate. Ala317 is a (6R)-5,10-methylene-5,6,7,8-tetrahydrofolate binding site.

The protein belongs to the thymidylate synthase family. Bacterial-type ThyA subfamily. As to quaternary structure, homodimer.

It localises to the cytoplasm. The enzyme catalyses dUMP + (6R)-5,10-methylene-5,6,7,8-tetrahydrofolate = 7,8-dihydrofolate + dTMP. The protein operates within pyrimidine metabolism; dTTP biosynthesis. In terms of biological role, catalyzes the reductive methylation of 2'-deoxyuridine-5'-monophosphate (dUMP) to 2'-deoxythymidine-5'-monophosphate (dTMP) while utilizing 5,10-methylenetetrahydrofolate (mTHF) as the methyl donor and reductant in the reaction, yielding dihydrofolate (DHF) as a by-product. This enzymatic reaction provides an intracellular de novo source of dTMP, an essential precursor for DNA biosynthesis. The polypeptide is Thymidylate synthase (Lactobacillus delbrueckii subsp. bulgaricus (strain ATCC BAA-365 / Lb-18)).